The primary structure comprises 156 residues: Ribosome maturation factor RimP (156 aa).

This sequence belongs to the RimP family.

It is found in the cytoplasm. Required for maturation of 30S ribosomal subunits. The polypeptide is Ribosome maturation factor RimP (Treponema pallidum (strain Nichols)).